Consider the following 879-residue polypeptide: Alanine--tRNA ligase (879 aa).

The Zn(2+) site is built by His-566, His-570, Cys-668, and His-672.

Belongs to the class-II aminoacyl-tRNA synthetase family. Zn(2+) is required as a cofactor.

Its subcellular location is the cytoplasm. It catalyses the reaction tRNA(Ala) + L-alanine + ATP = L-alanyl-tRNA(Ala) + AMP + diphosphate. Catalyzes the attachment of alanine to tRNA(Ala) in a two-step reaction: alanine is first activated by ATP to form Ala-AMP and then transferred to the acceptor end of tRNA(Ala). Also edits incorrectly charged Ser-tRNA(Ala) and Gly-tRNA(Ala) via its editing domain. This is Alanine--tRNA ligase from Clostridium botulinum (strain Hall / ATCC 3502 / NCTC 13319 / Type A).